The chain runs to 166 residues: Phosphopantetheine adenylyltransferase (166 aa).

Ser-9 contacts substrate. ATP is bound by residues 9-10 (SF) and His-17. Substrate is bound by residues Lys-41, Leu-74, and Lys-88. ATP-binding positions include 89–91 (GLR), Glu-99, and 123–129 (YIHLSST).

This sequence belongs to the bacterial CoaD family. In terms of assembly, homohexamer. It depends on Mg(2+) as a cofactor.

It localises to the cytoplasm. The enzyme catalyses (R)-4'-phosphopantetheine + ATP + H(+) = 3'-dephospho-CoA + diphosphate. Its pathway is cofactor biosynthesis; coenzyme A biosynthesis; CoA from (R)-pantothenate: step 4/5. Functionally, reversibly transfers an adenylyl group from ATP to 4'-phosphopantetheine, yielding dephospho-CoA (dPCoA) and pyrophosphate. The polypeptide is Phosphopantetheine adenylyltransferase (Pseudarthrobacter chlorophenolicus (strain ATCC 700700 / DSM 12829 / CIP 107037 / JCM 12360 / KCTC 9906 / NCIMB 13794 / A6) (Arthrobacter chlorophenolicus)).